The chain runs to 112 residues: uncharacterized protein (112 aa).

The helical transmembrane segment at 62 to 82 threads the bilayer; it reads THSFIFFILFLFIFIFLTFSH.

It is found in the membrane. This is an uncharacterized protein from Saccharomyces cerevisiae (strain ATCC 204508 / S288c) (Baker's yeast).